A 175-amino-acid polypeptide reads, in one-letter code: Nucleoside triphosphate/diphosphate phosphatase (175 aa).

Residue arginine 23 is the Proton donor of the active site. Mg(2+)-binding residues include asparagine 87, aspartate 103, aspartate 105, aspartate 107, aspartate 120, and glutamate 123.

It belongs to the Ntdp family. It depends on Mg(2+) as a cofactor.

The enzyme catalyses a ribonucleoside 5'-triphosphate + H2O = a ribonucleoside 5'-diphosphate + phosphate + H(+). It carries out the reaction a ribonucleoside 5'-diphosphate + H2O = a ribonucleoside 5'-phosphate + phosphate + H(+). Its function is as follows. Has nucleoside phosphatase activity towards nucleoside triphosphates and nucleoside diphosphates. In Shouchella clausii (strain KSM-K16) (Alkalihalobacillus clausii), this protein is Nucleoside triphosphate/diphosphate phosphatase.